Here is a 444-residue protein sequence, read N- to C-terminus: Na(+)/H(+) antiporter NhaA (444 aa).

11 consecutive transmembrane segments (helical) span residues 27-47, 72-92, 108-128, 136-156, 167-187, 190-210, 212-232, 312-332, 349-369, 385-405, and 419-439; these read TTGLMLMLMTVVALLLANSPL, IHHWINDGLMAIFFFIIGLEI, MLPILAAIGGMALPALIYYAI, AGWGIPMATDIAFAISALVLL, FLVALAIVDDLGAVVVIALFY, EINMLPLLFAFISFLVLVSFN, FGIHAILPYFVVGFIMWLFML, HLPVSLVVIPLFALANAGVSI, VMAGLVFGKVFGIAGISYLAI, VFGVAFLGGIGFTMSIFIAEL, and IGILAASLFAGIFGFIWLRFI.

Belongs to the NhaA Na(+)/H(+) (TC 2.A.33) antiporter family.

The protein localises to the cell inner membrane. The catalysed reaction is Na(+)(in) + 2 H(+)(out) = Na(+)(out) + 2 H(+)(in). Its function is as follows. Na(+)/H(+) antiporter that extrudes sodium in exchange for external protons. This is Na(+)/H(+) antiporter NhaA from Sulfurimonas denitrificans (strain ATCC 33889 / DSM 1251) (Thiomicrospira denitrificans (strain ATCC 33889 / DSM 1251)).